The sequence spans 470 residues: E3 ubiquitin-protein ligase TRAIP (470 aa).

The RING-type; atypical zinc finger occupies 7 to 50 (CTICSDFFDHSRDVAAIHCGHTFHLQCLIQWFETAPSRTCPQCR). Residues 76–277 (AEFLKNELDS…RKKLMILQGT (202 aa)) adopt a coiled-coil conformation. The interaction with CYLD stretch occupies residues 211 to 470 (LKEARKATGE…QPKLDTFLCQ (260 aa)). Positions 461 to 470 (QPKLDTFLCQ) match the PIP-box motif.

Belongs to the TRAIP family. In terms of assembly, interacts (via PIP-box) with PCNA. Binds TRAF1, TRAF2, TRAF3, TRAF5 and TRAF6 is part of the receptor-TRAF signaling complex. May interact with CYLD; the C-terminus interacts with CYLD, however the interaction was not detected with the full-length protein. Interacts with POLK and POLN. Interacts with UIMC1. Post-translationally, autoubiquitinated. Sumoylated; sumoylation is required for nuclear localization. Sumoylation increases protein stability, possibly by preventing ubiquitination. Detected in testis and thymus, and at lower levels in spleen.

Its subcellular location is the nucleus. The protein localises to the nucleoplasm. It localises to the nucleolus. It is found in the chromosome. The protein resides in the cytoplasm. Its subcellular location is the perinuclear region. It carries out the reaction S-ubiquitinyl-[E2 ubiquitin-conjugating enzyme]-L-cysteine + [acceptor protein]-L-lysine = [E2 ubiquitin-conjugating enzyme]-L-cysteine + N(6)-ubiquitinyl-[acceptor protein]-L-lysine.. It functions in the pathway protein modification; protein ubiquitination. Its function is as follows. E3 ubiquitin ligase required to protect genome stability in response to replication stress. Acts as a key regulator of interstrand cross-link repair, which takes place when both strands of duplex DNA are covalently tethered together, thereby blocking replication and transcription. During mitosis, controls the choice between the two pathways of replication-coupled interstrand-cross-link repair by mediating ubiquitination of MCM7 subunit of the CMG helicase complex. Short ubiquitin chains on MCM7 promote recruitment of DNA glycosylase NEIL3. If the interstrand cross-link cannot be cleaved by NEIL3, the ubiquitin chains continue to grow on MCM7, promoting the unloading of the CMG helicase complex by the VCP/p97 ATPase, enabling the Fanconi anemia DNA repair pathway. Only catalyzes ubiquitination of MCM7 when forks converge. Also involved in the repair of covalent DNA-protein cross-links (DPCs) during DNA synthesis: promotes ubiquitination of DPCs, leading to their degradation by the proteasome. Has also been proposed to play a role in promoting translesion synthesis by mediating the assembly of 'Lys-63'-linked poly-ubiquitin chains on the Y-family polymerase POLN in order to facilitate bypass of DNA lesions and preserve genomic integrity. The function in translesion synthesis is however controversial. Acts as a regulator of the spindle assembly checkpoint. Also acts as a negative regulator of innate immune signaling by inhibiting activation of NF-kappa-B mediated by TNF. Negatively regulates TLR3/4- and RIG-I-mediated IRF3 activation and subsequent IFNB1 production and cellular antiviral response by promoting 'Lys-48'-linked polyubiquitination of TNK1 leading to its proteasomal degradation. The polypeptide is E3 ubiquitin-protein ligase TRAIP (Mus musculus (Mouse)).